Reading from the N-terminus, the 162-residue chain is Phosphopantetheine adenylyltransferase (162 aa).

Residue Ser-11 participates in substrate binding. Residues 11–12 (SF) and His-19 contribute to the ATP site. Positions 43, 76, and 90 each coordinate substrate. Residues 91 to 93 (GLR), Glu-101, and 126 to 132 (HLYISSS) contribute to the ATP site.

It belongs to the bacterial CoaD family. Homohexamer. Mg(2+) is required as a cofactor.

The protein localises to the cytoplasm. It catalyses the reaction (R)-4'-phosphopantetheine + ATP + H(+) = 3'-dephospho-CoA + diphosphate. The protein operates within cofactor biosynthesis; coenzyme A biosynthesis; CoA from (R)-pantothenate: step 4/5. Its function is as follows. Reversibly transfers an adenylyl group from ATP to 4'-phosphopantetheine, yielding dephospho-CoA (dPCoA) and pyrophosphate. The protein is Phosphopantetheine adenylyltransferase of Streptococcus pneumoniae (strain ATCC 700669 / Spain 23F-1).